Here is a 185-residue protein sequence, read N- to C-terminus: MSILISPDNNTGWGLCSAGMYGGAKRRSSQHPVRVRGHYRAPWGAYTRGVISRRTTVDDVIDSVVADAQRYTRPVATSTVDSVIDSVVANARRYAQRKRRLQRRRRRPTAAMTAARAVLRRAQRIGRRAMRRAAASASAGRARRQAARQAAAAIASMAQPRRGNIYWVRDASGVRVPVRSRPPRS.

Position 2 is an N-acetylserine; by host (serine 2). The propeptide occupies 2-23; sequence SILISPDNNTGWGLCSAGMYGG. Phosphothreonine; by host is present on threonine 55. Residue serine 172 is modified to Phosphoserine; by host. The Nuclear localization signal signature appears at 175–185; it reads RVPVRSRPPRS.

This sequence belongs to the adenoviridae histone-like nucleoprotein family. Interacts with the core-capsid bridging protein; this interaction bridges the virus core to the capsid. Interacts with host NPM1; this interaction might play a role in placing the pre-histone-like nucleoprotein on the viral DNA or regulating viral gene expression. Interacts with host HMGB1; this interaction inhibits host immune response. Cleaved near the N-terminus by the viral protease during virion maturation to form the mature protein.

The protein resides in the virion. It localises to the host nucleus. Its subcellular location is the host nucleolus. Its function is as follows. Plays a role in the inhibition of host immune response within the nucleus. Interacts with cellular nucleosomes and immobilizes the host immune danger signal HMGB1 on chromatin. In turn, prevents HMGB1 release out of the cell and thus decreases inflammation. Also plays a role in the wrapping and condensation of the viral DNA. May also promote viral genome import into the nucleus. The chain is Pre-histone-like nucleoprotein from Human adenovirus F serotype 40 (HAdV-40).